A 150-amino-acid chain; its full sequence is Transcriptional repressor NrdR (150 aa).

A zinc finger lies at 3 to 34 (CPFCAFADSKVVDSRPDKGGSTIRRRRECESC). Positions 49-139 (PLVIKKDGRR…VYRSFKDITE (91 aa)) constitute an ATP-cone domain.

It belongs to the NrdR family. It depends on Zn(2+) as a cofactor.

In terms of biological role, negatively regulates transcription of bacterial ribonucleotide reductase nrd genes and operons by binding to NrdR-boxes. This chain is Transcriptional repressor NrdR, found in Geotalea uraniireducens (strain Rf4) (Geobacter uraniireducens).